Here is a 290-residue protein sequence, read N- to C-terminus: Thymidylate synthase (290 aa).

Residues Arg27 and 152 to 153 (RR) contribute to the dUMP site. The active-site Nucleophile is the Cys172. Residues 192–195 (RSAD), Asn203, and 233–235 (HVY) contribute to the dUMP site. Asp195 contacts (6R)-5,10-methylene-5,6,7,8-tetrahydrofolate. A (6R)-5,10-methylene-5,6,7,8-tetrahydrofolate-binding site is contributed by Ala289.

Belongs to the thymidylate synthase family. In terms of assembly, homodimer.

The catalysed reaction is dUMP + (6R)-5,10-methylene-5,6,7,8-tetrahydrofolate = 7,8-dihydrofolate + dTMP. It functions in the pathway pyrimidine metabolism; dTTP biosynthesis. The sequence is that of Thymidylate synthase (TS) from Ateles.